The following is a 144-amino-acid chain: Maximins 4/H3 type 2 (144 aa).

An N-terminal signal peptide occupies residues 1–18; the sequence is MNFKYIIAVSFFIASAYA. The propeptide occupies 19–43; that stretch reads RRNEKDVQSLSQRDVLEEESLREIR. An Asparagine amide modification is found at Asn70. Positions 74 to 123 are excised as a propeptide; it reads TAEDHEVMKRLEAVMRDLDSLDHPEEASERETRGFNQEEIANLFTKKEKR. An Isoleucine amide modification is found at Ile143.

The protein belongs to the bombinin family. Expressed by the skin glands.

The protein resides in the secreted. Functionally, maximin-4 shows antibacterial activity against both Gram-positive and Gram-negative bacteria. It also shows antimicrobial activity against the fungus C.albicans, but not against A.flavus nor P.uticale. It has little hemolytic activity. It does not possess a significant cytotoxicity against tumor cell lines. It does not possess a significant anti-HIV activity. In terms of biological role, maximin-H3 shows antibacterial activity against both Gram-positive and Gram-negative bacteria. It also shows antimicrobial activity against the fungus C.albicans. Shows strong hemolytic activity. The protein is Maximins 4/H3 type 2 of Bombina maxima (Giant fire-bellied toad).